The following is a 270-amino-acid chain: Calpain small subunit 1 (270 aa).

M1 is modified (N-acetylmethionine). A Phosphoserine modification is found at S6. One can recognise an EF-hand 1; atypical domain in the interval 98–132 (EEERQFRKLFVQLAGDDMEVSATELMNILNKVVTR). Ca(2+)-binding residues include A111, D114, E116, E121, D139, D154, D156, T158, K160, and E165. EF-hand domains lie at 141–174 (FGIDTCRSMVAVMDSDTTGKLGFEEFKYLWNNIK), 171–206 (NNIKKWQGIYKRFDTDRSGTIGSNELPGAFEAAGFH), 207–235 (LNQHIYSMIIRRYSDETGNMDFDNFISCL), and 236–270 (VRLDAMFRAFRSLDKNGTGQIQVNIQEWLQLTMYS). The residue at position 181 (K181) is an N6-acetyllysine. Ca(2+)-binding residues include D184, D186, S188, T190, E195, and D227.

Homodimer or heterodimer of a large (catalytic) and a small (regulatory) subunit. In presence of calcium, the heterodimer dissociates.

It localises to the cytoplasm. Its subcellular location is the cell membrane. Regulatory subunit of the calcium-regulated non-lysosomal thiol-protease which catalyzes limited proteolysis of substrates involved in cytoskeletal remodeling and signal transduction. Essential for embryonic development. This chain is Calpain small subunit 1 (Capns1), found in Rattus norvegicus (Rat).